We begin with the raw amino-acid sequence, 339 residues long: Retinol dehydrogenase 10-A (339 aa).

The helical; Signal-anchor transmembrane segment at 3–23 (IFVEFFLVMLKVCWAIVMAGF) threads the bilayer. 40–64 (VITGAGGGLGRLFAKEFARRRATLV) lines the NADP(+) pocket. Position 195 (Ser195) interacts with substrate. Tyr208 (proton acceptor) is an active-site residue.

It belongs to the short-chain dehydrogenases/reductases (SDR) family.

The protein resides in the microsome membrane. The protein localises to the endoplasmic reticulum membrane. It carries out the reaction all-trans-retinol + NADP(+) = all-trans-retinal + NADPH + H(+). Its pathway is cofactor metabolism; retinol metabolism. Functionally, retinol dehydrogenase with a clear preference for NADP. Converts all-trans-retinol to all-trans-retinal. Has no detectable activity towards 11-cis-retinol, 9-cis-retinol and 13-cis-retinol. This chain is Retinol dehydrogenase 10-A (rdh10a), found in Danio rerio (Zebrafish).